The sequence spans 142 residues: MAKKIDAYIKLQVKSGSANPSPPVGPALGQKGVNIMEFCKAFNARTEKMEKGMPIPVVITVYSDRSFTFETKTPPASYLLKTAAGLKSGSPRPNTQKVGTIARAKIQEIAEMKAADMTGADVEAMTRSIEGTARSMGLVVEG.

The protein belongs to the universal ribosomal protein uL11 family. As to quaternary structure, part of the ribosomal stalk of the 50S ribosomal subunit. Interacts with L10 and the large rRNA to form the base of the stalk. L10 forms an elongated spine to which L12 dimers bind in a sequential fashion forming a multimeric L10(L12)X complex. One or more lysine residues are methylated.

Forms part of the ribosomal stalk which helps the ribosome interact with GTP-bound translation factors. This Shewanella oneidensis (strain ATCC 700550 / JCM 31522 / CIP 106686 / LMG 19005 / NCIMB 14063 / MR-1) protein is Large ribosomal subunit protein uL11.